We begin with the raw amino-acid sequence, 267 residues long: Undecaprenyl-diphosphatase (267 aa).

A run of 8 helical transmembrane segments spans residues Met1–Ile21, Gln39–Phe59, Ala83–Met103, Leu111–Val131, Ala144–Thr164, Phe189–Thr209, Phe218–Leu238, and Met246–Met266.

Belongs to the UppP family.

The protein resides in the cell inner membrane. The catalysed reaction is di-trans,octa-cis-undecaprenyl diphosphate + H2O = di-trans,octa-cis-undecaprenyl phosphate + phosphate + H(+). Its function is as follows. Catalyzes the dephosphorylation of undecaprenyl diphosphate (UPP). Confers resistance to bacitracin. The sequence is that of Undecaprenyl-diphosphatase from Vibrio vulnificus (strain CMCP6).